The chain runs to 310 residues: MTVPPPLVVITGPTATGKTEVGINVALACGGEIVSADSMMVYRGMDIGTAKPSASEMRGVPHHLIDVVDPDEEFNVARYQQLAGEAIVGILGRKRVPLLVGGTGLYIRSVVEDYRFPVRADRRLRNRLQEAAELYGCARLHRHLAVVDPVTARRLHPNDQRRIIRALEVYYQSGIPFSRYPDRRDRAPKYLPVMFGLNMERGRLYRRIEDRVDAMIRAGLVREVQSLLEKGYGPELVAMKGLGYKEIAAHLRGSLTLEEAIHILKRNTRRFAKRQLTWFRRDEQIRWLDVEECGGPVGAAREIVGSIEQE.

12-19 (GPTATGKT) lines the ATP pocket. Position 14 to 19 (14 to 19 (TATGKT)) interacts with substrate. The interaction with substrate tRNA stretch occupies residues 37 to 40 (DSMM).

The protein belongs to the IPP transferase family. As to quaternary structure, monomer. Mg(2+) serves as cofactor.

It catalyses the reaction adenosine(37) in tRNA + dimethylallyl diphosphate = N(6)-dimethylallyladenosine(37) in tRNA + diphosphate. Functionally, catalyzes the transfer of a dimethylallyl group onto the adenine at position 37 in tRNAs that read codons beginning with uridine, leading to the formation of N6-(dimethylallyl)adenosine (i(6)A). The polypeptide is tRNA dimethylallyltransferase (Desulforudis audaxviator (strain MP104C)).